The sequence spans 184 residues: MNEKIKPFEGKMQKSLDSLKEEYVGIRAGRANPHLLDKLRVDYYGTPSAIQAVANVSVPEARVIQIQPWEAKLIKEIEKAIIASDLGLTPSNDGKVIRLVFPELTEERRKDLVKDVKKKAENTKVAVRNVRRDANDAIKKLAKANEISEDEQKQIEDEIQKITDKFITEVDKVMEDKSKEILTV.

Belongs to the RRF family.

The protein localises to the cytoplasm. Responsible for the release of ribosomes from messenger RNA at the termination of protein biosynthesis. May increase the efficiency of translation by recycling ribosomes from one round of translation to another. The protein is Ribosome-recycling factor of Lachnoclostridium phytofermentans (strain ATCC 700394 / DSM 18823 / ISDg) (Clostridium phytofermentans).